Reading from the N-terminus, the 351-residue chain is Calcium release-activated calcium channel protein 1 (351 aa).

Residues 1–21 show a composition bias toward polar residues; sequence MSVWTTANNSGLETPTKSPIT. Disordered regions lie at residues 1-39 and 71-141; these read MSVW…TGNH and HAHP…EDLH. The Cytoplasmic portion of the chain corresponds to 1–163; sequence MSVWTTANNS…SRAKLKASSK (163 aa). 2 stretches are compositionally biased toward low complexity: residues 22–33 and 80–93; these read SSVPRAARSSAV and SNSP…SNNS. The span at 94–106 shows a compositional bias: polar residues; it reads AGFQRTSISNSLL. The helical transmembrane segment at 164-181 threads the bilayer; sequence TSALLSGFAMVAMVEVQL. Residues 182 to 191 lie on the Extracellular side of the membrane; the sequence is DHDTNVPPGM. A helical membrane pass occupies residues 192 to 212; it reads LIAFAICTTLLVAVHMLALMI. Residues 213–248 are Cytoplasmic-facing; sequence STCILPNIETVCNLHSISLVHESPHERLHWYIETAW. A helical membrane pass occupies residues 249 to 269; sequence AFSTLLGLILFLLEIAILCWV. At 270–277 the chain is on the extracellular side; the sequence is KFYDLSPP. The chain crosses the membrane as a helical span at residues 278-298; sequence AAWSACVVLIPVMIIFMAFAI. At 299–351 the chain is on the cytoplasmic side; it reads HFYRSLVSHKYEVTVSGIRELEMLKEQMEQDHLEHHNNIRNNGMNYGASGDIV.

It belongs to the Orai family. As to quaternary structure, hexamer.

Its subcellular location is the cell membrane. It carries out the reaction Ca(2+)(in) = Ca(2+)(out). Functionally, pore-forming subunit of inward rectifying Ca(2+) release-activated Ca(2+) (CRAC) channels. Assembles in hexameric CRAC channels that mediate Ca(2+) influx upon depletion of endoplasmic reticulum Ca(2+) store and channel activation by Ca(2+) sensor Stim, a process known as store-operated Ca(2+) entry (SOCE). Regulates transcription factor NFAT nuclear import. The chain is Calcium release-activated calcium channel protein 1 from Drosophila melanogaster (Fruit fly).